Here is an 84-residue protein sequence, read N- to C-terminus: Small ribosomal subunit protein bS16c (84 aa).

Belongs to the bacterial ribosomal protein bS16 family.

Its subcellular location is the plastid. It localises to the chloroplast. The protein is Small ribosomal subunit protein bS16c of Anthoceros angustus (Hornwort).